We begin with the raw amino-acid sequence, 387 residues long: 1,3-propanediol dehydrogenase (387 aa).

The protein belongs to the iron-containing alcohol dehydrogenase family. Homooctamer. Fe cation is required as a cofactor.

It catalyses the reaction propane-1,3-diol + NAD(+) = 3-hydroxypropanal + NADH + H(+). Inhibited by the metal chelator 1,10-phenanthroline. Its function is as follows. Catalyzes the reduction of 3-hydroxypropanal. Is considerably less active with glyceraldehyde, propionaldehyde, acetaldehyde, and butyraldehyde. Also catalyzes the oxidation of various primary, secondary, and tertiary alcohols. Is most active with substrates containing two primary alcohol groups separated by one or two carbon atoms. 1,3-propanediol is the preferred substrate. The protein is 1,3-propanediol dehydrogenase of Citrobacter freundii.